The sequence spans 264 residues: Iodotyrosine deiodinase (264 aa).

Residues 75-79 (RRTVR) and 103-104 (SG) each bind FMN. Ala105, Glu132, Tyr136, and Lys157 together coordinate 3-iodo-L-tyrosine. FMN contacts are provided by residues 212–214 (TST) and Arg254.

Belongs to the nitroreductase family. It depends on FMN as a cofactor.

It catalyses the reaction 2 iodide + L-tyrosine + 2 NADP(+) = 3,5-diiodo-L-tyrosine + 2 NADPH + H(+). It carries out the reaction iodide + L-tyrosine + NADP(+) = 3-iodo-L-tyrosine + NADPH. The catalysed reaction is 3-iodo-L-tyrosine + iodide + NADP(+) = 3,5-diiodo-L-tyrosine + NADPH + H(+). The enzyme catalyses L-tyrosine + chloride + NADP(+) = 3-chloro-L-tyrosine + NADPH. It catalyses the reaction bromide + L-tyrosine + NADP(+) = 3-bromo-L-tyrosine + NADPH. Functionally, catalyzes the dehalogenation of halotyrosines such as 3,5-diiodo-L-tyrosine. Likely to also catalyze the dehalogenation of other halotyrosines such as 3-bromo-L-tyrosine, 3-chloro-L-tyrosine and 3-iodo-L-tyrosine. This Nematostella vectensis (Starlet sea anemone) protein is Iodotyrosine deiodinase.